The chain runs to 210 residues: Pyridoxine/pyridoxamine 5'-phosphate oxidase (210 aa).

Substrate contacts are provided by residues 7-10 (REDY) and Lys-65. Residues 60–65 (RMVLLK), 75–76 (FT), Arg-81, Lys-82, and Gln-104 contribute to the FMN site. Residues Tyr-122, Arg-126, and Ser-130 each contribute to the substrate site. Residues 139 to 140 (QS) and Trp-183 each bind FMN. 189–191 (RLH) provides a ligand contact to substrate. Arg-193 is an FMN binding site.

It belongs to the pyridoxamine 5'-phosphate oxidase family. As to quaternary structure, homodimer. FMN serves as cofactor.

It carries out the reaction pyridoxamine 5'-phosphate + O2 + H2O = pyridoxal 5'-phosphate + H2O2 + NH4(+). The catalysed reaction is pyridoxine 5'-phosphate + O2 = pyridoxal 5'-phosphate + H2O2. The protein operates within cofactor metabolism; pyridoxal 5'-phosphate salvage; pyridoxal 5'-phosphate from pyridoxamine 5'-phosphate: step 1/1. It functions in the pathway cofactor metabolism; pyridoxal 5'-phosphate salvage; pyridoxal 5'-phosphate from pyridoxine 5'-phosphate: step 1/1. Its function is as follows. Catalyzes the oxidation of either pyridoxine 5'-phosphate (PNP) or pyridoxamine 5'-phosphate (PMP) into pyridoxal 5'-phosphate (PLP). The polypeptide is Pyridoxine/pyridoxamine 5'-phosphate oxidase (Neisseria meningitidis serogroup A / serotype 4A (strain DSM 15465 / Z2491)).